The sequence spans 422 residues: F-box/FBD/LRR-repeat protein At5g56420 (422 aa).

In terms of domain architecture, F-box spans 5–54 (RDRLSQLPDDFLLQILSWLPTKDVLVTSLLSKRWRFLWTLVPRLNYDLRL). LRR repeat units follow at residues 59 to 85 (CPRFSQFVDRSLLLHKAPTLESLNIKI), 136 to 163 (VLKLENITLEDASCYVCFQSLKTLHLLD), 164 to 189 (VKYLDDQSLPRIISSCSSLEDLVVQR), 193 to 212 (DNVKVVTVTAPSLKTLSLHK), 214 to 238 (SQAFEGDDDGFLIDTPKLKRVDIED), 279 to 304 (LCLITSDAAYPAGTIFSQLVHLELCT), and 305 to 330 (CAPRWWDLLTRLIEDSPKLRVLKLRQ). The FBD domain occupies 342–391 (SWKQPALPKCLLFHLETFKWELYEGSQKQKEVATFILKHAIRLKTAIISP).

The sequence is that of F-box/FBD/LRR-repeat protein At5g56420 from Arabidopsis thaliana (Mouse-ear cress).